The chain runs to 800 residues: DNA topoisomerase 4 subunit A (800 aa).

Residues Leu-31–Val-496 form the Topo IIA-type catalytic domain. The active-site O-(5'-phospho-DNA)-tyrosine intermediate is Tyr-119.

Belongs to the type II topoisomerase GyrA/ParC subunit family. ParC type 2 subfamily. As to quaternary structure, heterotetramer composed of ParC and ParE.

It is found in the cell membrane. The enzyme catalyses ATP-dependent breakage, passage and rejoining of double-stranded DNA.. In terms of biological role, topoisomerase IV is essential for chromosome segregation. It relaxes supercoiled DNA. Performs the decatenation events required during the replication of a circular DNA molecule. This chain is DNA topoisomerase 4 subunit A, found in Staphylococcus epidermidis (strain ATCC 12228 / FDA PCI 1200).